We begin with the raw amino-acid sequence, 438 residues long: UDP-N-acetylmuramoylalanine--D-glutamate ligase (438 aa).

Residue 115–121 (GSNGKST) coordinates ATP.

This sequence belongs to the MurCDEF family.

It is found in the cytoplasm. It carries out the reaction UDP-N-acetyl-alpha-D-muramoyl-L-alanine + D-glutamate + ATP = UDP-N-acetyl-alpha-D-muramoyl-L-alanyl-D-glutamate + ADP + phosphate + H(+). It functions in the pathway cell wall biogenesis; peptidoglycan biosynthesis. Cell wall formation. Catalyzes the addition of glutamate to the nucleotide precursor UDP-N-acetylmuramoyl-L-alanine (UMA). This chain is UDP-N-acetylmuramoylalanine--D-glutamate ligase, found in Vibrio atlanticus (strain LGP32) (Vibrio splendidus (strain Mel32)).